The chain runs to 725 residues: Methionine--tRNA ligase (725 aa).

A 'HIGH' region motif is present at residues 27-37 (PYANGQIHIGH). Residues Cys158, Cys161, Cys171, and Cys174 each coordinate Zn(2+). A 'KMSKS' region motif is present at residues 348–352 (KMSKS). Lys351 provides a ligand contact to ATP. A tRNA-binding domain is found at 619–725 (DFAKIDLRIA…SGAKPGMRVK (107 aa)).

Belongs to the class-I aminoacyl-tRNA synthetase family. MetG type 1 subfamily. As to quaternary structure, homodimer. The cofactor is Zn(2+).

It is found in the cytoplasm. The enzyme catalyses tRNA(Met) + L-methionine + ATP = L-methionyl-tRNA(Met) + AMP + diphosphate. Functionally, is required not only for elongation of protein synthesis but also for the initiation of all mRNA translation through initiator tRNA(fMet) aminoacylation. In Burkholderia pseudomallei (strain 1710b), this protein is Methionine--tRNA ligase.